The chain runs to 100 residues: Large ribosomal subunit protein uL23 (100 aa).

The protein belongs to the universal ribosomal protein uL23 family. Part of the 50S ribosomal subunit. Contacts protein L29, and trigger factor when it is bound to the ribosome.

In terms of biological role, one of the early assembly proteins it binds 23S rRNA. One of the proteins that surrounds the polypeptide exit tunnel on the outside of the ribosome. Forms the main docking site for trigger factor binding to the ribosome. The protein is Large ribosomal subunit protein uL23 of Synechococcus sp. (strain CC9902).